Here is a 544-residue protein sequence, read N- to C-terminus: Putative lipase ATG15 (544 aa).

Residues 1–45 (MVADFDSGWYEGAGDELGQGARNGVLRERLGGNEKAQVVRSRRKA) lie on the Cytoplasmic side of the membrane. Residues 46-66 (VAWNVLMVLGLILYVLYSACF) traverse the membrane as a helical; Signal-anchor for type II membrane protein segment. At 67–544 (AQARQWWRTN…NWFGYCTEYA (478 aa)) the chain is on the lumenal side. N-linked (GlcNAc...) asparagine glycosylation is found at Asn200, Asn229, and Asn234. Ser362 serves as the catalytic Charge relay system. A disordered region spans residues 508 to 530 (PMPSSVASKPTPTPTSPGSPSST).

It belongs to the AB hydrolase superfamily. Lipase family. As to quaternary structure, binds to both phosphatidylinositol (PI) and phosphatidylinositol 3,5-bisphosphate (PIP2).

The protein localises to the endosome. The protein resides in the multivesicular body membrane. Its subcellular location is the prevacuolar compartment membrane. The enzyme catalyses a triacylglycerol + H2O = a diacylglycerol + a fatty acid + H(+). Its function is as follows. Lipase which is essential for lysis of subvacuolar cytoplasm to vacuole targeted bodies and intravacuolar autophagic bodies. Involved in the lysis of intravacuolar multivesicular body (MVB) vesicles. The intravacuolar membrane disintegration by ATG15 is critical to life span extension. The protein is Putative lipase ATG15 (ATG15) of Eremothecium gossypii (strain ATCC 10895 / CBS 109.51 / FGSC 9923 / NRRL Y-1056) (Yeast).